The primary structure comprises 99 residues: A-type ATP synthase subunit F (99 aa).

This sequence belongs to the V-ATPase F subunit family. Has multiple subunits with at least A(3), B(3), C, D, E, F, H, I and proteolipid K(x).

The protein localises to the cell membrane. In terms of biological role, component of the A-type ATP synthase that produces ATP from ADP in the presence of a proton gradient across the membrane. The protein is A-type ATP synthase subunit F of Methanococcoides burtonii (strain DSM 6242 / NBRC 107633 / OCM 468 / ACE-M).